Consider the following 67-residue polypeptide: Protein SlyX homolog (67 aa).

Residues threonine 48–glutamine 60 are compositionally biased toward polar residues. Residues threonine 48 to tyrosine 67 are disordered.

Belongs to the SlyX family.

The sequence is that of Protein SlyX homolog from Cupriavidus pinatubonensis (strain JMP 134 / LMG 1197) (Cupriavidus necator (strain JMP 134)).